The following is a 222-amino-acid chain: uncharacterized protein (222 aa).

In terms of domain architecture, HTH gntR-type spans 8 to 77 (AKKGQIIYRY…GNAGYFVAKN (70 aa)).

This is an uncharacterized protein from Mycoplasma pneumoniae (strain ATCC 29342 / M129 / Subtype 1) (Mycoplasmoides pneumoniae).